Consider the following 473-residue polypeptide: Phosphatidylserine synthase 2 (473 aa).

The segment at 1 to 25 (MRRGERRVAGGSGSESPLLKGRRST) is disordered. Residues 1–40 (MRRGERRVAGGSGSESPLLKGRRSTESEVYDDGTNTFFWR) lie on the Cytoplasmic side of the membrane. 3 positions are modified to phosphoserine: S12, S14, and S16. A helical membrane pass occupies residues 41–61 (AHTLTVLFILTCALGYVTLLE). The Lumenal portion of the chain corresponds to 62-74 (ETPQDTAYNTKRG). The helical transmembrane segment at 75–95 (IVASILVFLCFGVTQAKDGPF) threads the bilayer. The Cytoplasmic portion of the chain corresponds to 96–104 (SRPHPAYWR). Residues 105–125 (FWLCVSVVYELFLIFILFQTV) traverse the membrane as a helical segment. The Lumenal portion of the chain corresponds to 126 to 291 (QDGRQFLKYV…EWKPASSLHR (166 aa)). An N-linked (GlcNAc...) asparagine glycan is attached at N159. A helical transmembrane segment spans residues 292-312 (WLAVCGIILVFLLAELNTFYL). Residue K313 is a topological domain, cytoplasmic. A helical membrane pass occupies residues 314-334 (FVLWMPPEHYLVLLRLVFFVN). The Lumenal segment spans residues 335 to 354 (VGGVAMREIYDFMDELKPHR). The chain crosses the membrane as a helical span at residues 355-375 (KLGQQAWLVAAITVTELLIVV). Over 376–381 (KYDPHT) the chain is Cytoplasmic. The helical transmembrane segment at 382-402 (LTLSLPFYISQCWTLGSILVL) threads the bilayer. Topologically, residues 403–473 (TWTVWRFFLR…TAEEGTSAAS (71 aa)) are lumenal. A disordered region spans residues 422–473 (RRQKQQSHQARAVNNRDGHPGPDDDLLGTGTAEEEGTTNDGVTAEEGTSAAS).

Belongs to the phosphatidyl serine synthase family. In terms of tissue distribution, highly expressed in testis. Detected at lower levels in kidney and heart.

It is found in the endoplasmic reticulum membrane. The protein resides in the membrane. The enzyme catalyses a 1,2-diacyl-sn-glycero-3-phosphoethanolamine + L-serine = a 1,2-diacyl-sn-glycero-3-phospho-L-serine + ethanolamine. The catalysed reaction is 1-hexadecanoyl-2-(9Z-octadecenoyl)-sn-glycero-3-phosphoethanolamine + L-serine = 1-hexadecanoyl-2-(9Z-octadecenoyl)-sn-glycero-3-phospho-L-serine + ethanolamine. It carries out the reaction 1-hexadecanoyl-2-(4Z,7Z,10Z,13Z,16Z,19Z-docosahexaenoyl)-sn-glycero-3-phosphoethanolamine + L-serine = 1-hexadecanoyl-2-(4Z,7Z,10Z,13Z,16Z,19Z-docosahexaenoyl)-sn-glycero-3-phosphoserine + ethanolamine. It catalyses the reaction 1-octadecanoyl-2-(5Z,8Z,11Z,14Z)-eicosatetraenoyl-sn-glycero-3-phosphoethanolamine + L-serine = 1-octadecanoyl-2-(5Z,8Z,11Z,14Z)-eicosatetraenoyl-sn-glycero-3-phosphoserine + ethanolamine. The enzyme catalyses 1-octadecanoyl-2-(4Z,7Z,10Z,13Z,16Z,19Z-docosahexaenoyl)-sn-glycero-3-phosphoethanolamine + L-serine = 1-octadecanoyl-2-(4Z,7Z,10Z,13Z,16Z,19Z-docosahexaenoyl)-sn-glycero-3-phosphoserine + ethanolamine. The catalysed reaction is 1-(1Z-octadecenyl)-2-(4Z,7Z,10Z,13Z,16Z,19Z-docosahexaenoyl)-sn-glycero-3-phosphoethanolamine + L-serine = 1-(1Z-octadecenyl)-2-(4Z,7Z,10Z,13Z,16Z,19Z-docosahexaenoyl)-sn-glycero-3-phospho-L-serine + ethanolamine. It carries out the reaction 1-octadecanoyl-2-(9Z-octadecenoyl)-sn-glycero-3-phosphoethanolamine + L-serine = 1-octadecanoyl-2-(9Z-octadecenoyl)-sn-glycero-3-phospho-L-serine + ethanolamine. It catalyses the reaction 1-(1Z-octadecenyl)-2-(9Z-octadecenoyl)-sn-glycero-3-phosphoethanolamine + L-serine = 1-(1Z-octadecenyl)-2-(9Z-octadecenoyl)-sn-glycero-3-phospho-L-serine + ethanolamine. The enzyme catalyses 1-(1Z-octadecenyl)-2-(5Z,8Z,11Z,14Z- eicosatetraenoyl)-sn-glycero-3-phosphoethanolamine + L-serine = 1-(1Z-octadecenyl)-2-(5Z,8Z,11Z,14Z-eicosatetraenoyl)-sn-glycero-3-phospho-L-serine + ethanolamine. Its pathway is phospholipid metabolism; phosphatidylserine biosynthesis. Its activity is regulated as follows. Almost complete inhibition by ethanolamine in both the mitochondria-associated membrane (MAM) and endoplasmic reticulum (ER) per se. Its function is as follows. Catalyzes a base-exchange reaction in which the polar head group of phosphatidylethanolamine (PE) or phosphatidylcholine (PC) is replaced by L-serine. Catalyzes the conversion of phosphatatidylethanolamine and does not act on phosphatidylcholine. Can utilize both phosphatidylethanolamine (PE) plasmalogen and diacyl PE as substrate and the latter is six times better utilized, indicating the importance of an ester linkage at the sn-1 position. Although it shows no sn-1 fatty acyl preference, exhibits significant preference towards docosahexaenoic acid (22:6n-3) compared with 18:1 or 20:4 at the sn-2 position. This is Phosphatidylserine synthase 2 (Ptdss2) from Mus musculus (Mouse).